Consider the following 437-residue polypeptide: Neomycin resistance protein (437 aa).

Disordered regions lie at residues 161-285 (GQRG…EEEA) and 305-338 (VSGA…PVPD). Residues 203-229 (PPTGARSPGATAGARATASTSSSSVRS) are compositionally biased toward low complexity. Over residues 324–338 (RRRHRGRRHGRPVPD) the composition is skewed to basic residues.

This sequence belongs to the Gram-positive plasmids replication protein type 1 family.

The protein is Neomycin resistance protein of Streptomyces cyanogenus.